Here is a 245-residue protein sequence, read N- to C-terminus: 1-(5-phosphoribosyl)-5-[(5-phosphoribosylamino)methylideneamino] imidazole-4-carboxamide isomerase (245 aa).

Residue aspartate 7 is the Proton acceptor of the active site. Residue aspartate 129 is the Proton donor of the active site.

The protein belongs to the HisA/HisF family.

It is found in the cytoplasm. It carries out the reaction 1-(5-phospho-beta-D-ribosyl)-5-[(5-phospho-beta-D-ribosylamino)methylideneamino]imidazole-4-carboxamide = 5-[(5-phospho-1-deoxy-D-ribulos-1-ylimino)methylamino]-1-(5-phospho-beta-D-ribosyl)imidazole-4-carboxamide. It functions in the pathway amino-acid biosynthesis; L-histidine biosynthesis; L-histidine from 5-phospho-alpha-D-ribose 1-diphosphate: step 4/9. The chain is 1-(5-phosphoribosyl)-5-[(5-phosphoribosylamino)methylideneamino] imidazole-4-carboxamide isomerase from Shigella boydii serotype 18 (strain CDC 3083-94 / BS512).